The primary structure comprises 279 residues: Protein ABIL4 (279 aa).

Disordered stretches follow at residues 192 to 211 (VHNNINNRTPNKRSNSPMRF) and 219 to 241 (LLKRSSSPSQPKKPPLALPEPQR). The segment covering 194 to 208 (NNINNRTPNKRSNSP) has biased composition (polar residues). The segment covering 219 to 228 (LLKRSSSPSQ) has biased composition (low complexity).

This sequence belongs to the ABI family. As to quaternary structure, binds SCAR.

It localises to the cytoplasm. It is found in the cytoskeleton. Involved in regulation of actin and microtubule organization. Part of a WAVE complex that activates the Arp2/3 complex. The sequence is that of Protein ABIL4 (ABIL4) from Arabidopsis thaliana (Mouse-ear cress).